A 375-amino-acid chain; its full sequence is Chaperone protein DnaJ (375 aa).

In terms of domain architecture, J spans 5–69 (DYYEVLGVGK…QKRAHYDQFG (65 aa)). Residues 132–214 (GKETTIEIPR…CGGTGKVKKR (83 aa)) form a CR-type zinc finger. Zn(2+)-binding residues include cysteine 145, cysteine 148, cysteine 162, cysteine 165, cysteine 188, cysteine 191, cysteine 202, and cysteine 205. CXXCXGXG motif repeat units lie at residues 145–152 (CETCSGSG), 162–169 (CSHCGGSG), 188–195 (CHYCNGTG), and 202–209 (CSTCGGTG).

The protein belongs to the DnaJ family. In terms of assembly, homodimer. Zn(2+) is required as a cofactor.

The protein localises to the cytoplasm. In terms of biological role, participates actively in the response to hyperosmotic and heat shock by preventing the aggregation of stress-denatured proteins and by disaggregating proteins, also in an autonomous, DnaK-independent fashion. Unfolded proteins bind initially to DnaJ; upon interaction with the DnaJ-bound protein, DnaK hydrolyzes its bound ATP, resulting in the formation of a stable complex. GrpE releases ADP from DnaK; ATP binding to DnaK triggers the release of the substrate protein, thus completing the reaction cycle. Several rounds of ATP-dependent interactions between DnaJ, DnaK and GrpE are required for fully efficient folding. Also involved, together with DnaK and GrpE, in the DNA replication of plasmids through activation of initiation proteins. The sequence is that of Chaperone protein DnaJ from Bacillus licheniformis (strain ATCC 14580 / DSM 13 / JCM 2505 / CCUG 7422 / NBRC 12200 / NCIMB 9375 / NCTC 10341 / NRRL NRS-1264 / Gibson 46).